The following is a 474-amino-acid chain: Alginate biosynthesis protein AlgX (474 aa).

The N-terminal stretch at 1-26 (MKTRTSRLFRLSALAAGLCLAQAALA) is a signal peptide. The segment at 27 to 347 (ADPGAAPSYQ…QAMPLVDNGC (321 aa)) is SGNH hydrolase-like domain. An intrachain disulfide couples C44 to C229. Residue D174 is part of the active site. H176 functions as the Proton acceptor in the catalytic mechanism. The Nucleophile role is filled by S269. A disulfide bridge links C347 with C460. Residues 348-474 (SGRKTVLSRK…AKASQSVAGR (127 aa)) form a CBM domain region.

Belongs to the AlgX family. In terms of assembly, monomer. Interacts with AlgK and MucD.

It is found in the periplasm. The protein operates within glycan biosynthesis; alginate biosynthesis. Functionally, plays two roles in the biosynthesis of the exopolysaccharide alginate: protects alginate from degradation as the polymer traverses the periplasm, and also plays a role in its O-acetylation. Acetylation of alginate causes the cells in the biofilm to adhere better to lung epithelium, form microcolonies, and resist the effects of the host immune system and/or antibiotics. Displays a low acetylesterase activity in vitro using a pseudosubstrate, 3-carboxyumbelliferyl acetate. Probably has acetyltransferase activity in vivo. This Pseudomonas aeruginosa (strain ATCC 15692 / DSM 22644 / CIP 104116 / JCM 14847 / LMG 12228 / 1C / PRS 101 / PAO1) protein is Alginate biosynthesis protein AlgX (algX).